The primary structure comprises 268 residues: Protein APE_1980.1 (268 aa).

This sequence belongs to the CinA family.

The protein is Protein APE_1980.1 of Aeropyrum pernix (strain ATCC 700893 / DSM 11879 / JCM 9820 / NBRC 100138 / K1).